We begin with the raw amino-acid sequence, 368 residues long: Carbamoyl phosphate synthase small chain (368 aa).

The tract at residues 1 to 178 (MKAVLGLEDG…GAECAWKGSG (178 aa)) is CPSase. The L-glutamine site is built by Ser-45, Gly-230, and Gly-232. The Glutamine amidotransferase type-1 domain occupies 182-368 (HAVVVDLGIK…KVVKVLGGDL (187 aa)). Cys-257 (nucleophile) is an active-site residue. L-glutamine-binding residues include Phe-258, Gln-261, Asn-299, Gly-301, and Tyr-302. Catalysis depends on residues His-342 and Glu-344.

Belongs to the CarA family. Composed of two chains; the small (or glutamine) chain promotes the hydrolysis of glutamine to ammonia, which is used by the large (or ammonia) chain to synthesize carbamoyl phosphate. Tetramer of heterodimers (alpha,beta)4.

The enzyme catalyses hydrogencarbonate + L-glutamine + 2 ATP + H2O = carbamoyl phosphate + L-glutamate + 2 ADP + phosphate + 2 H(+). It carries out the reaction L-glutamine + H2O = L-glutamate + NH4(+). The protein operates within amino-acid biosynthesis; L-arginine biosynthesis; carbamoyl phosphate from bicarbonate: step 1/1. It participates in pyrimidine metabolism; UMP biosynthesis via de novo pathway; (S)-dihydroorotate from bicarbonate: step 1/3. Small subunit of the glutamine-dependent carbamoyl phosphate synthetase (CPSase). CPSase catalyzes the formation of carbamoyl phosphate from the ammonia moiety of glutamine, carbonate, and phosphate donated by ATP, constituting the first step of 2 biosynthetic pathways, one leading to arginine and/or urea and the other to pyrimidine nucleotides. The small subunit (glutamine amidotransferase) binds and cleaves glutamine to supply the large subunit with the substrate ammonia. This chain is Carbamoyl phosphate synthase small chain, found in Methanosarcina acetivorans (strain ATCC 35395 / DSM 2834 / JCM 12185 / C2A).